Here is a 438-residue protein sequence, read N- to C-terminus: Ribosomal protein uS12 methylthiotransferase RimO (438 aa).

The 111-residue stretch at 5–115 (PRVGFVSLGC…VMSAVHTHLP (111 aa)) folds into the MTTase N-terminal domain. 6 residues coordinate [4Fe-4S] cluster: C14, C50, C79, C146, C150, and C153. The Radical SAM core domain occupies 132–369 (LTPKHYAYLK…MAVQAEISAR (238 aa)). The TRAM domain maps to 372-438 (ERRVGQTLQV…SEHDLWGERR (67 aa)).

It belongs to the methylthiotransferase family. RimO subfamily. It depends on [4Fe-4S] cluster as a cofactor.

Its subcellular location is the cytoplasm. It catalyses the reaction L-aspartate(89)-[ribosomal protein uS12]-hydrogen + (sulfur carrier)-SH + AH2 + 2 S-adenosyl-L-methionine = 3-methylsulfanyl-L-aspartate(89)-[ribosomal protein uS12]-hydrogen + (sulfur carrier)-H + 5'-deoxyadenosine + L-methionine + A + S-adenosyl-L-homocysteine + 2 H(+). Catalyzes the methylthiolation of an aspartic acid residue of ribosomal protein uS12. This is Ribosomal protein uS12 methylthiotransferase RimO from Chromobacterium violaceum (strain ATCC 12472 / DSM 30191 / JCM 1249 / CCUG 213 / NBRC 12614 / NCIMB 9131 / NCTC 9757 / MK).